Reading from the N-terminus, the 309-residue chain is Branched-chain-amino-acid aminotransferase (309 aa).

Lys160 is modified (N6-(pyridoxal phosphate)lysine).

It belongs to the class-IV pyridoxal-phosphate-dependent aminotransferase family. Homohexamer. The cofactor is pyridoxal 5'-phosphate.

The enzyme catalyses L-leucine + 2-oxoglutarate = 4-methyl-2-oxopentanoate + L-glutamate. It carries out the reaction L-isoleucine + 2-oxoglutarate = (S)-3-methyl-2-oxopentanoate + L-glutamate. The catalysed reaction is L-valine + 2-oxoglutarate = 3-methyl-2-oxobutanoate + L-glutamate. Its pathway is amino-acid biosynthesis; L-isoleucine biosynthesis; L-isoleucine from 2-oxobutanoate: step 4/4. It participates in amino-acid biosynthesis; L-leucine biosynthesis; L-leucine from 3-methyl-2-oxobutanoate: step 4/4. It functions in the pathway amino-acid biosynthesis; L-valine biosynthesis; L-valine from pyruvate: step 4/4. In terms of biological role, acts on leucine, isoleucine and valine. The protein is Branched-chain-amino-acid aminotransferase (ilvE) of Salmonella typhi.